The sequence spans 340 residues: MKQSRTKRVLAIGELKFATNTLKRLSEKYHFEFIVPDPHDRSKTIEKIHEAASKSTFDACFWLFRNAAISPFTEEMLGPLLPTCKLFVTGAAGYNNVDVDWATRNGVYVANTPNGPTEGTANMNLMLFMCTLRGAREAEQSLRLGKWRQNLSLTDDPYGKRVGIIGMGAIGKSFAQKILPLGCEIVYHNRNRLEAEEEKRLGASFVSFDELLSSSDVISINCPLTPATHDLISTKEFEKMKDGVYIINTARGAIINEDAFIKAIKSGKVARAGLDVFLNEPTPNKFWLECDKVTIQPHCGVYTNFTVAKTEECVLASIETFLDTGIPTNPVNGPFGMNGC.

NAD(+) contacts are provided by residues Ala-169 to Ile-170, Thr-249 to Arg-251, and Asp-275. Arg-251 is a catalytic residue. Residue Glu-280 is part of the active site. The active-site Proton donor is His-298. His-298 to Val-301 contacts NAD(+).

This sequence belongs to the D-isomer specific 2-hydroxyacid dehydrogenase family.

This chain is Putative 2-hydroxyacid dehydrogenase C1773.17c, found in Schizosaccharomyces pombe (strain 972 / ATCC 24843) (Fission yeast).